A 178-amino-acid polypeptide reads, in one-letter code: Large ribosomal subunit protein uL10 (178 aa).

Belongs to the universal ribosomal protein uL10 family. As to quaternary structure, part of the ribosomal stalk of the 50S ribosomal subunit. The N-terminus interacts with L11 and the large rRNA to form the base of the stalk. The C-terminus forms an elongated spine to which L12 dimers bind in a sequential fashion forming a multimeric L10(L12)X complex.

Forms part of the ribosomal stalk, playing a central role in the interaction of the ribosome with GTP-bound translation factors. This is Large ribosomal subunit protein uL10 from Albidiferax ferrireducens (strain ATCC BAA-621 / DSM 15236 / T118) (Rhodoferax ferrireducens).